We begin with the raw amino-acid sequence, 122 residues long: Serum amyloid A-3 protein (122 aa).

The signal sequence occupies residues Met1–Ser18. The interval Ala100–Tyr122 is disordered.

This sequence belongs to the SAA family. Expressed by the liver; secreted in plasma.

It localises to the secreted. Functionally, major acute phase reactant. Apolipoprotein of the HDL complex. In vitro exhibits antimicrobial activity against Escherichia coli, Streptococcus uberis and Pseudomonas aeruginosa. This chain is Serum amyloid A-3 protein (SAA3), found in Mesocricetus auratus (Golden hamster).